A 394-amino-acid polypeptide reads, in one-letter code: NAD(P)H-quinone oxidoreductase subunit H (394 aa).

This sequence belongs to the complex I 49 kDa subunit family. NDH-1 can be composed of about 15 different subunits; different subcomplexes with different compositions have been identified which probably have different functions.

It is found in the cellular thylakoid membrane. The enzyme catalyses a plastoquinone + NADH + (n+1) H(+)(in) = a plastoquinol + NAD(+) + n H(+)(out). The catalysed reaction is a plastoquinone + NADPH + (n+1) H(+)(in) = a plastoquinol + NADP(+) + n H(+)(out). NDH-1 shuttles electrons from an unknown electron donor, via FMN and iron-sulfur (Fe-S) centers, to quinones in the respiratory and/or the photosynthetic chain. The immediate electron acceptor for the enzyme in this species is believed to be plastoquinone. Couples the redox reaction to proton translocation, and thus conserves the redox energy in a proton gradient. Cyanobacterial NDH-1 also plays a role in inorganic carbon-concentration. The sequence is that of NAD(P)H-quinone oxidoreductase subunit H from Synechococcus sp. (strain JA-3-3Ab) (Cyanobacteria bacterium Yellowstone A-Prime).